A 397-amino-acid polypeptide reads, in one-letter code: Flavohemoprotein (397 aa).

In terms of domain architecture, Globin spans 4–140; that stretch reads SFSPHTITLI…IANLLKDREA (137 aa). His-87 contributes to the heme b binding site. Catalysis depends on charge relay system residues Tyr-97 and Glu-139. Residues 151–397 are reductase; the sequence is GGWIHWRRFV…FGPMDEEMAA (247 aa). Positions 154-258 constitute an FAD-binding FR-type domain; it reads IHWRRFVISK…TPPVGDFFLP (105 aa). FAD-binding positions include Tyr-192 and 207–210; that span reads RNYS. 271-276 contributes to the NADP(+) binding site; that stretch reads GVGLTP. Residue 387–390 participates in FAD binding; it reads FFGP.

This sequence belongs to the globin family. Two-domain flavohemoproteins subfamily. The protein in the C-terminal section; belongs to the flavoprotein pyridine nucleotide cytochrome reductase family. Heme b is required as a cofactor. Requires FAD as cofactor.

It catalyses the reaction 2 nitric oxide + NADPH + 2 O2 = 2 nitrate + NADP(+) + H(+). It carries out the reaction 2 nitric oxide + NADH + 2 O2 = 2 nitrate + NAD(+) + H(+). Functionally, is involved in NO detoxification in an aerobic process, termed nitric oxide dioxygenase (NOD) reaction that utilizes O(2) and NAD(P)H to convert NO to nitrate, which protects the bacterium from various noxious nitrogen compounds. Therefore, plays a central role in the inducible response to nitrosative stress. This is Flavohemoprotein from Xylella fastidiosa (strain Temecula1 / ATCC 700964).